Reading from the N-terminus, the 750-residue chain is MTIRSPEPEVKIVVEKDPVKTSFEKWAKPGHFSRTLAKGPSTTTWIWNLHADAHDFDSHTNDLEEVSRKVFSAHFGQLAIIFIWLSGMYFHGARFSNYEAWLGDPTHIKPSAQVVWPIVGQEILNGDVGGGFQGIQITSGFFQIWRASGITSELQLYSTAIGGLIFAALMLFAGWFHYHKAAPKLVWFQDVESMLNHHLAGLLGLGSLAWAGHQVHVSLPINELLDAGIDPKEIPLPHEFILNRDLLAQLFPSFAKGLTPFFTLNWSEYSDFLTFRGGLNPVTGGLWLTDTAHHHLAIAVVFLVAGHMYRTNWGIGHSIKEILEAHKGPFTGEGHKGLYEILTTSWHAQLALNLAMLGSLTIIVAHHMYSMPPYPYLAIDYSTQLSLFTHHMWIGGFTIVGAAAHAAIFMVRDYDPTSQYNNLLDRVLRHRDAIISHLNWACIFLGFHSFGLYIHNDTMSALGRPEDMFSDTAIQLQPIFAQWVQNTHVLAPNLTAPNATASTSLTWGGGDLVAVGGKVALLPISLGTADFLVHHIHAFTIHVTVLILLKGVLFARSSRLIPDKANLGFRFPCDGPGRGGTCQVSAWDHVFLGLFWMYNAISVVIFHFSWKMQSDVWGSLSNQGVVTHITGGNFAQSSITINGWLRDFLWAQAAQVIQSYGSSLSAYGLLFLGAHFVWAFSLMFLFSGRGYWQELIESIVWAHNKLKVAPAIQPRALSIVQGRAVGVAHYLLGGIATTWAFFLARIIAVG.

The next 8 helical transmembrane spans lie at 70–93 (VFSA…FHGA), 156–179 (LYST…FHYH), 195–219 (LNHH…HVSL), 291–309 (TAHH…GHMY), 346–369 (WHAQ…HHMY), 385–411 (LSLF…IFMV), 433–455 (AIIS…LYIH), and 531–549 (FLVH…LILL). Cys573 and Cys582 together coordinate [4Fe-4S] cluster. 2 consecutive transmembrane segments (helical) span residues 589–610 (HVFL…HFSW) and 664–686 (LSAY…MFLF). His675 contributes to the chlorophyll a' binding site. Residues Met683 and Tyr691 each contribute to the chlorophyll a site. Trp692 is a phylloquinone binding site. A helical transmembrane segment spans residues 724 to 744 (AVGVAHYLLGGIATTWAFFLA).

Belongs to the PsaA/PsaB family. As to quaternary structure, the PsaA/B heterodimer binds the P700 chlorophyll special pair and subsequent electron acceptors. PSI consists of a core antenna complex that captures photons, and an electron transfer chain that converts photonic excitation into a charge separation. The eukaryotic PSI reaction center is composed of at least 11 subunits. Requires P700 is a chlorophyll a/chlorophyll a' dimer, A0 is one or more chlorophyll a, A1 is one or both phylloquinones and FX is a shared 4Fe-4S iron-sulfur center. as cofactor.

It is found in the plastid. It localises to the chloroplast thylakoid membrane. It carries out the reaction reduced [plastocyanin] + hnu + oxidized [2Fe-2S]-[ferredoxin] = oxidized [plastocyanin] + reduced [2Fe-2S]-[ferredoxin]. Its function is as follows. PsaA and PsaB bind P700, the primary electron donor of photosystem I (PSI), as well as the electron acceptors A0, A1 and FX. PSI is a plastocyanin-ferredoxin oxidoreductase, converting photonic excitation into a charge separation, which transfers an electron from the donor P700 chlorophyll pair to the spectroscopically characterized acceptors A0, A1, FX, FA and FB in turn. Oxidized P700 is reduced on the lumenal side of the thylakoid membrane by plastocyanin. In Anthoceros angustus (Hornwort), this protein is Photosystem I P700 chlorophyll a apoprotein A1.